Here is a 435-residue protein sequence, read N- to C-terminus: Adenylosuccinate synthetase (435 aa).

Residues 20 to 26 (GDEGKGK) and 48 to 50 (GHT) each bind GTP. The active-site Proton acceptor is the Asp-21. 2 residues coordinate Mg(2+): Asp-21 and Gly-48. Residues 21–24 (DEGK), 46–49 (NAGH), Thr-134, Arg-148, Gln-229, Thr-244, and Arg-308 each bind IMP. Catalysis depends on His-49, which acts as the Proton donor. A substrate-binding site is contributed by 304 to 310 (TTTGRPR). GTP contacts are provided by residues Arg-310, 336 to 338 (KVD), and 422 to 424 (SMG).

Belongs to the adenylosuccinate synthetase family. As to quaternary structure, homodimer. Mg(2+) is required as a cofactor.

The protein localises to the cytoplasm. The enzyme catalyses IMP + L-aspartate + GTP = N(6)-(1,2-dicarboxyethyl)-AMP + GDP + phosphate + 2 H(+). It functions in the pathway purine metabolism; AMP biosynthesis via de novo pathway; AMP from IMP: step 1/2. In terms of biological role, plays an important role in the de novo pathway of purine nucleotide biosynthesis. Catalyzes the first committed step in the biosynthesis of AMP from IMP. The chain is Adenylosuccinate synthetase from Thermoplasma acidophilum (strain ATCC 25905 / DSM 1728 / JCM 9062 / NBRC 15155 / AMRC-C165).